Here is an 86-residue protein sequence, read N- to C-terminus: Large ribosomal subunit protein bL27 (86 aa).

Belongs to the bacterial ribosomal protein bL27 family.

In Flavobacterium psychrophilum (strain ATCC 49511 / DSM 21280 / CIP 103535 / JIP02/86), this protein is Large ribosomal subunit protein bL27.